The chain runs to 471 residues: Glutamate--tRNA ligase (471 aa).

The short motif at proline 9 to glycine 19 is the 'HIGH' region element. Residues cysteine 98, cysteine 100, cysteine 125, and histidine 127 each contribute to the Zn(2+) site. The 'KMSKS' region motif lies at lysine 237–arginine 241. Residue lysine 240 coordinates ATP.

Belongs to the class-I aminoacyl-tRNA synthetase family. Glutamate--tRNA ligase type 1 subfamily. Monomer. Zn(2+) is required as a cofactor.

The protein resides in the cytoplasm. It catalyses the reaction tRNA(Glu) + L-glutamate + ATP = L-glutamyl-tRNA(Glu) + AMP + diphosphate. In terms of biological role, catalyzes the attachment of glutamate to tRNA(Glu) in a two-step reaction: glutamate is first activated by ATP to form Glu-AMP and then transferred to the acceptor end of tRNA(Glu). This chain is Glutamate--tRNA ligase, found in Cronobacter sakazakii (strain ATCC BAA-894) (Enterobacter sakazakii).